A 125-amino-acid chain; its full sequence is Histone H2B type 1 (125 aa).

Residues 1–36 form a disordered region; sequence MPEPAKSRPAPKKGSKKAVTKAQKKDGKERKRSRKE. Residue P2 is modified to N-acetylproline. E3 bears the ADP-ribosyl glutamic acid mark. The residue at position 6 (K6) is an N6-(2-hydroxyisobutyryl)lysine; alternate. At K6 the chain carries N6-(beta-hydroxybutyryl)lysine; alternate. K6 is subject to N6-acetyllysine; alternate. K6 carries the N6-butyryllysine; alternate modification. An N6-crotonyllysine; alternate modification is found at K6. K6 is subject to N6-lactoyllysine; alternate. A Glycyl lysine isopeptide (Lys-Gly) (interchain with G-Cter in SUMO2); alternate cross-link involves residue K6. Position 7 is an ADP-ribosylserine (S7). Residues 9–19 show a composition bias toward basic residues; sequence PAPKKGSKKAV. K12 carries the post-translational modification N6-(beta-hydroxybutyryl)lysine; alternate. K12 and K13 each carry N6-acetyllysine; alternate. An N6-crotonyllysine; alternate mark is found at K12 and K13. K12 carries the post-translational modification N6-lactoyllysine; alternate. K13 bears the N6-(2-hydroxyisobutyryl)lysine; alternate mark. Position 15 is a phosphoserine; by STK4/MST1 (S15). Residues K16, K17, K21, and K24 each carry the N6-acetyllysine; alternate modification. Residues K16, K17, K21, and K24 each carry the N6-crotonyllysine; alternate modification. N6-lactoyllysine; alternate occurs at positions 16, 17, 21, and 24. K17 carries the post-translational modification N6-glutaryllysine; alternate. 2 positions are modified to N6-(2-hydroxyisobutyryl)lysine; alternate: K21 and K24. Position 21 is an N6-(beta-hydroxybutyryl)lysine; alternate (K21). K21 carries the N6-butyryllysine; alternate modification. K21 participates in a covalent cross-link: Glycyl lysine isopeptide (Lys-Gly) (interchain with G-Cter in SUMO2); alternate. K25 is subject to N6-(2-hydroxyisobutyryl)lysine. Position 35 is an N6-(2-hydroxyisobutyryl)lysine; alternate (K35). K35 carries the N6-(beta-hydroxybutyryl)lysine; alternate modification. K35 is modified (N6-crotonyllysine; alternate). An N6-glutaryllysine; alternate modification is found at K35. K35 bears the N6-succinyllysine; alternate mark. A Glycyl lysine isopeptide (Lys-Gly) (interchain with G-Cter in ubiquitin); alternate cross-link involves residue K35. Position 36 is a polyADP-ribosyl glutamic acid (E36). S37 is subject to Phosphoserine; by AMPK. Residues K44, K47, and K58 each carry the N6-(2-hydroxyisobutyryl)lysine; alternate modification. At K44 the chain carries N6-lactoyllysine; alternate. K44 and K47 each carry N6-glutaryllysine; alternate. Position 47 is an N6-methyllysine; alternate (K47). K58 carries the N6,N6-dimethyllysine; alternate modification. R79 bears the Dimethylated arginine mark. Residue K85 is modified to N6-(2-hydroxyisobutyryl)lysine; alternate. K85 carries the post-translational modification N6-acetyllysine; alternate. K85 carries the N6-lactoyllysine; alternate modification. K85 bears the N6,N6,N6-trimethyllysine; alternate mark. Omega-N-methylarginine occurs at positions 86 and 92. Position 108 is an N6-(2-hydroxyisobutyryl)lysine; alternate (K108). K108 carries the N6-lactoyllysine; alternate modification. Position 108 is an N6-glutaryllysine; alternate (K108). At K108 the chain carries N6-methyllysine; alternate. A glycan (O-linked (GlcNAc) serine) is linked at S112. T115 carries the phosphothreonine modification. 2 positions are modified to N6-(2-hydroxyisobutyryl)lysine; alternate: K116 and K120. At K116 the chain carries N6-(beta-hydroxybutyryl)lysine; alternate. An N6-lactoyllysine; alternate mark is found at K116 and K120. Residues K116 and K120 each carry the N6-glutaryllysine; alternate modification. Residues K116 and K120 each carry the N6-succinyllysine; alternate modification. Position 116 is an N6-methylated lysine; alternate (K116). K120 participates in a covalent cross-link: Glycyl lysine isopeptide (Lys-Gly) (interchain with G-Cter in ubiquitin); alternate.

This sequence belongs to the histone H2B family. As to quaternary structure, the nucleosome is a histone octamer containing two molecules each of H2A, H2B, H3 and H4 assembled in one H3-H4 heterotetramer and two H2A-H2B heterodimers. The octamer wraps approximately 147 bp of DNA. Monoubiquitination at Lys-35 (H2BK34Ub) by the MSL1/MSL2 dimer is required for histone H3 'Lys-4' (H3K4me) and 'Lys-79' (H3K79me) methylation and transcription activation at specific gene loci, such as HOXA9 and MEIS1 loci. Similarly, monoubiquitination at Lys-120 (H2BK120Ub) by the RNF20/40 complex gives a specific tag for epigenetic transcriptional activation and is also prerequisite for histone H3 'Lys-4' and 'Lys-79' methylation. It also functions cooperatively with the FACT dimer to stimulate elongation by RNA polymerase II. H2BK120Ub also acts as a regulator of mRNA splicing: deubiquitination by USP49 is required for efficient cotranscriptional splicing of a large set of exons. In terms of processing, phosphorylated on Ser-15 (H2BS14ph) by STK4/MST1 during apoptosis; which facilitates apoptotic chromatin condensation. Also phosphorylated on Ser-15 in response to DNA double strand breaks (DSBs), and in correlation with somatic hypermutation and immunoglobulin class-switch recombination. Phosphorylation at Ser-37 (H2BS36ph) by AMPK in response to stress promotes transcription. Post-translationally, ADP-ribosylated by PARP1 or PARP2 on Ser-7 (H2BS6ADPr) in response to DNA damage. H2BS6ADPr promotes recruitment of CHD1L. Mono-ADP-ribosylated on Glu-3 (H2BE2ADPr) by PARP3 in response to single-strand breaks. Poly ADP-ribosylation on Glu-36 (H2BE35ADPr) by PARP1 regulates adipogenesis: it inhibits phosphorylation at Ser-37 (H2BS36ph), thereby blocking expression of pro-adipogenetic genes. Crotonylation (Kcr) is specifically present in male germ cells and marks testis-specific genes in post-meiotic cells, including X-linked genes that escape sex chromosome inactivation in haploid cells. Crotonylation marks active promoters and enhancers and confers resistance to transcriptional repressors. It is also associated with post-meiotically activated genes on autosomes. In terms of processing, glcNAcylation at Ser-112 promotes monoubiquitination of Lys-120. It fluctuates in response to extracellular glucose, and associates with transcribed genes. Post-translationally, lactylated in macrophages by EP300/P300 by using lactoyl-CoA directly derived from endogenous or exogenous lactate, leading to stimulates gene transcription.

It is found in the nucleus. The protein localises to the chromosome. Functionally, core component of nucleosome. Nucleosomes wrap and compact DNA into chromatin, limiting DNA accessibility to the cellular machineries which require DNA as a template. Histones thereby play a central role in transcription regulation, DNA repair, DNA replication and chromosomal stability. DNA accessibility is regulated via a complex set of post-translational modifications of histones, also called histone code, and nucleosome remodeling. In terms of biological role, has broad antibacterial activity. May contribute to the formation of the functional antimicrobial barrier of the colonic epithelium, and to the bactericidal activity of amniotic fluid. This Rattus norvegicus (Rat) protein is Histone H2B type 1.